A 549-amino-acid polypeptide reads, in one-letter code: Probable protein kinase UbiB (549 aa).

The Protein kinase domain maps to 123–501; that stretch reads DFDDVPLASA…QHKAHKSNYL (379 aa). ATP-binding positions include 129-137 and K152; that span reads LASASIAQV. The active-site Proton acceptor is D287. 2 helical membrane-spanning segments follow: residues 498–517 and 521–540; these read SNYL…ILFT and TLWA…LLGW.

This sequence belongs to the ABC1 family. UbiB subfamily.

The protein localises to the cell inner membrane. Its pathway is cofactor biosynthesis; ubiquinone biosynthesis [regulation]. In terms of biological role, is probably a protein kinase regulator of UbiI activity which is involved in aerobic coenzyme Q (ubiquinone) biosynthesis. This Shewanella denitrificans (strain OS217 / ATCC BAA-1090 / DSM 15013) protein is Probable protein kinase UbiB.